A 330-amino-acid chain; its full sequence is 4,5-dihydroxyphthalate decarboxylase (330 aa).

The protein to P.putida DHP decarboxylase.

The enzyme catalyses 4,5-dihydroxyphthalate + H(+) = 3,4-dihydroxybenzoate + CO2. The protein operates within xenobiotic degradation; phthalate degradation; 3,4-dihydroxybenzoate from phthalate: step 3/3. This chain is 4,5-dihydroxyphthalate decarboxylase (phtD), found in Comamonas testosteroni (Pseudomonas testosteroni).